A 168-amino-acid polypeptide reads, in one-letter code: Nicotinamide-nucleotide adenylyltransferase (168 aa).

The protein belongs to the archaeal NMN adenylyltransferase family.

Its subcellular location is the cytoplasm. The catalysed reaction is beta-nicotinamide D-ribonucleotide + ATP + H(+) = diphosphate + NAD(+). It functions in the pathway cofactor biosynthesis; NAD(+) biosynthesis; NAD(+) from nicotinamide D-ribonucleotide: step 1/1. This Methanocorpusculum labreanum (strain ATCC 43576 / DSM 4855 / Z) protein is Nicotinamide-nucleotide adenylyltransferase.